Reading from the N-terminus, the 179-residue chain is Adenine phosphoribosyltransferase (179 aa).

This sequence belongs to the purine/pyrimidine phosphoribosyltransferase family. In terms of assembly, homodimer.

The protein localises to the cytoplasm. It catalyses the reaction AMP + diphosphate = 5-phospho-alpha-D-ribose 1-diphosphate + adenine. The protein operates within purine metabolism; AMP biosynthesis via salvage pathway; AMP from adenine: step 1/1. Its function is as follows. Catalyzes a salvage reaction resulting in the formation of AMP, that is energically less costly than de novo synthesis. The chain is Adenine phosphoribosyltransferase from Beijerinckia indica subsp. indica (strain ATCC 9039 / DSM 1715 / NCIMB 8712).